The chain runs to 157 residues: Snaclec 3 (157 aa).

The signal sequence occupies residues 1–23 (MGRLIFLSFGWLVVFLSLSGTGA). Disulfide bonds link C27/C38, C55/C153, and C128/C145. One can recognise a C-type lectin domain in the interval 34–154 (YGQHCYRAFS…CAGHYPFICK (121 aa)).

This sequence belongs to the snaclec family. As to quaternary structure, heterodimer; disulfide-linked. In terms of tissue distribution, expressed by the venom gland.

It localises to the secreted. Its function is as follows. Interferes with one step of hemostasis (modulation of platelet aggregation, or coagulation cascade, for example). This chain is Snaclec 3, found in Bitis gabonica (Gaboon adder).